A 398-amino-acid chain; its full sequence is Succinate--CoA ligase [ADP-forming] subunit beta (398 aa).

One can recognise an ATP-grasp domain in the interval 9–254 (KALLKSFGAP…KTEEDAKEIE (246 aa)). ATP contacts are provided by residues lysine 46, 53-55 (GRG), glutamate 109, alanine 112, and glutamate 117. Residues asparagine 209 and aspartate 223 each coordinate Mg(2+). Substrate contacts are provided by residues asparagine 274 and 331-333 (GIM).

This sequence belongs to the succinate/malate CoA ligase beta subunit family. As to quaternary structure, heterotetramer of two alpha and two beta subunits. Mg(2+) is required as a cofactor.

The catalysed reaction is succinate + ATP + CoA = succinyl-CoA + ADP + phosphate. The enzyme catalyses GTP + succinate + CoA = succinyl-CoA + GDP + phosphate. The protein operates within carbohydrate metabolism; tricarboxylic acid cycle; succinate from succinyl-CoA (ligase route): step 1/1. In terms of biological role, succinyl-CoA synthetase functions in the citric acid cycle (TCA), coupling the hydrolysis of succinyl-CoA to the synthesis of either ATP or GTP and thus represents the only step of substrate-level phosphorylation in the TCA. The beta subunit provides nucleotide specificity of the enzyme and binds the substrate succinate, while the binding sites for coenzyme A and phosphate are found in the alpha subunit. This is Succinate--CoA ligase [ADP-forming] subunit beta from Allorhizobium ampelinum (strain ATCC BAA-846 / DSM 112012 / S4) (Agrobacterium vitis (strain S4)).